Here is an 882-residue protein sequence, read N- to C-terminus: MTELSPKYNPAEVEAGRYQKWLDADVFKPSGDQKAKPYSIVIPPPNVTGKLHLGHAWDTTLQDIIIRQKRMQGFDTLWLPGMDHAGIATQAKVEERLRGQGITRYDLGREKFLDKVWEWKDEYATTIKEQWGKMGLSVDYSRERFTLDEGLSKAVRKVFVDLYKKGWIYRGEFIINWDPAARTALSDIEVIHKDVEGAFYHMNYMLEDGSRALQVATTRPETMFGDVAVAVNPEDPRYKDLIGKHVILPIVNKLIPIVGDEHADPEFGTGVVKITPAHDPNDFEVGQRHNLPQVNVMNDDGTMNELAGDFAGMDRFEARQATVAKLEELGALVNIEKRVHSVGHSERSGAVVEPRLSTQWFVKMDELAKQAMDNQETDDRVDFYPPRFNDTFLQWMENVHDWVISRQLWWGHQIPAWYNAEGEIYVGEEAPEGDGWTQDEDVLDTWFSSALWPFSTMGWPDTDVEDFKRYFPTSTLVTGYDIIFFWVSRMIFQTLEFTGRQPFQNVLIHGLIRDEEGRKMSKSLGNGIDPMDVIEKYGADSLRWFLSNGSAPGQDVRFSYEKMDASWNFINKIWNISRYILMNNEGLTLEEAESNVAKVAASEAGNVTDQWILHNLNETIAKVTENFDKFEFGVAGHILYNFIWEEFANWYVELTKEVLYSDNEAEKVITRSVLLYTLDKILRLLHPIMPFVTEEIYAQYAQGSIVTAAYPTVTPAFENEAAHKGVESLKDLIRAVRNARAEVNVAPSKPITILVKTADSELEDFFTSNVNYIKRFTNPEKLEISSAIAAPELAMTSIITGAEIYLPLADLLNVEEELARLDKELAKWQKELDMVGKKLGNERFVANAKPEVVQKEKDKQADYQAKYDATQERIAEMQKLVK.

Positions 45–55 (PNVTGKLHLGH) match the 'HIGH' region motif. The 'KMSKS' region signature appears at 519–523 (KMSKS). Lys-522 contacts ATP. Residues 808–882 (LADLLNVEEE…RIAEMQKLVK (75 aa)) are a coiled coil.

The protein belongs to the class-I aminoacyl-tRNA synthetase family. ValS type 1 subfamily. Monomer.

It localises to the cytoplasm. It carries out the reaction tRNA(Val) + L-valine + ATP = L-valyl-tRNA(Val) + AMP + diphosphate. In terms of biological role, catalyzes the attachment of valine to tRNA(Val). As ValRS can inadvertently accommodate and process structurally similar amino acids such as threonine, to avoid such errors, it has a 'posttransfer' editing activity that hydrolyzes mischarged Thr-tRNA(Val) in a tRNA-dependent manner. The polypeptide is Valine--tRNA ligase (Streptococcus pyogenes serotype M3 (strain ATCC BAA-595 / MGAS315)).